Consider the following 131-residue polypeptide: Small ribosomal subunit protein uS9 (131 aa).

It belongs to the universal ribosomal protein uS9 family.

The sequence is that of Small ribosomal subunit protein uS9 from Mycoplasmopsis synoviae (strain 53) (Mycoplasma synoviae).